The sequence spans 198 residues: Single-stranded DNA cytosine deaminase (198 aa).

The Bipartite nuclear localization signal signature appears at 1 to 30 (MDSLLMNRRKFLYQFKNVRWAKGRRETYLC). The segment at 2 to 26 (DSLLMNRRKFLYQFKNVRWAKGRRE) is interaction with SUPT6H. Residues 23 to 129 (GRRETYLCYV…KAEPEGLRRL (107 aa)) enclose the CMP/dCMP-type deaminase domain. The residue at position 27 (Thr27) is a Phosphothreonine; by PKA. Position 38 is a phosphoserine; by PKA (Ser38). The tract at residues 39-42 (ATSF) is important for interaction with CTNNBL1. Position 56 (His56) interacts with Zn(2+). Glu58 acts as the Proton donor in catalysis. The Zn(2+) site is built by Cys87 and Cys90. The segment at 88–116 (YDCARHVADFLRGNPNLSLRIFTARLYFC) is required for interaction with RNF126. Residues 183–198 (LYEVDDLRDAFRTLGL) carry the Nuclear export signal motif.

This sequence belongs to the cytidine and deoxycytidylate deaminase family. As to quaternary structure, interacts with CTNNBL1; the interaction is important for the immunoglobulin switch activity of AICDA. Interacts (via its NLS) with KPNA1. Interacts with PKA/PRKACA and PRKAR1A/PKR1. Interacts with TRIM28 and NCL. Interacts with SUPT6H. Interacts with RNF126. Directly interacts with MCM3AP; this interaction may favor AICDA recruitment to immunoglobulin variable region genes, hence promoting somatic hypermutations. It depends on Zn(2+) as a cofactor. Ser-38 is the major site whereas Thr-27 is the minor site of phosphorylation. Phosphorylation regulates its class-switch recombination activity. In terms of processing, probably monoubiquitinated on several residues by RNF126. As to expression, strongly expressed in lymph nodes and tonsils.

The protein resides in the nucleus. The protein localises to the cytoplasm. It is found in the cytosol. The enzyme catalyses a 2'-deoxycytidine in single-stranded DNA + H2O + H(+) = a 2'-deoxyuridine in single-stranded DNA + NH4(+). In terms of biological role, single-stranded DNA-specific cytidine deaminase. Involved in somatic hypermutation (SHM), gene conversion, and class-switch recombination (CSR) in B-lymphocytes by deaminating C to U during transcription of Ig-variable (V) and Ig-switch (S) region DNA. Required for several crucial steps of B-cell terminal differentiation necessary for efficient antibody responses. May also play a role in the epigenetic regulation of gene expression by participating in DNA demethylation. The polypeptide is Single-stranded DNA cytosine deaminase (AICDA) (Homo sapiens (Human)).